Here is a 231-residue protein sequence, read N- to C-terminus: Uridylate kinase (231 aa).

Residue 6–9 (KLSG) participates in ATP binding. Residues 14 to 19 (GEGGRG) form an involved in allosteric activation by GTP region. Residues G49 and R53 each contribute to the ATP site. UMP-binding positions include D66 and 127 to 134 (TSNPFFTT). ATP is bound by residues T154, Y160, and D163.

This sequence belongs to the UMP kinase family. Homohexamer.

The protein localises to the cytoplasm. The catalysed reaction is UMP + ATP = UDP + ADP. Its pathway is pyrimidine metabolism; CTP biosynthesis via de novo pathway; UDP from UMP (UMPK route): step 1/1. Its activity is regulated as follows. Allosterically activated by GTP. Inhibited by UTP. In terms of biological role, catalyzes the reversible phosphorylation of UMP to UDP. The chain is Uridylate kinase from Thermotoga petrophila (strain ATCC BAA-488 / DSM 13995 / JCM 10881 / RKU-1).